A 178-amino-acid chain; its full sequence is FMN reductase (NADH) RutF (178 aa).

This sequence belongs to the non-flavoprotein flavin reductase family. RutF subfamily.

The enzyme catalyses FMNH2 + NAD(+) = FMN + NADH + 2 H(+). Its function is as follows. Catalyzes the reduction of FMN to FMNH2 which is used to reduce pyrimidine by RutA via the Rut pathway. This is FMN reductase (NADH) RutF from Pseudomonas syringae pv. syringae (strain B728a).